The primary structure comprises 739 residues: NAD(P)H-quinone oxidoreductase subunit 5, chloroplastic (739 aa).

A run of 16 helical transmembrane segments spans residues 9-29 (LIIP…LIFF), 40-60 (WAFP…NLSI), 89-109 (IDSL…LVLI), 125-145 (FAYM…SNLI), 147-167 (IHIF…FWFT), 185-205 (GDFG…SFEF), 224-244 (LFVI…SAQF), 258-278 (TPIS…FLVA), 283-303 (LFTV…ITIL), 327-347 (LGYI…FHLI), 354-374 (ALLF…VGYS), 396-416 (TAFF…CFWS), 425-445 (WLYS…TAFY), 546-566 (LFPL…GIPF), 605-625 (IFSV…YRPI), and 718-738 (ISSY…IFQV).

Belongs to the complex I subunit 5 family. In terms of assembly, NDH is composed of at least 16 different subunits, 5 of which are encoded in the nucleus.

Its subcellular location is the plastid. The protein localises to the chloroplast thylakoid membrane. The enzyme catalyses a plastoquinone + NADH + (n+1) H(+)(in) = a plastoquinol + NAD(+) + n H(+)(out). The catalysed reaction is a plastoquinone + NADPH + (n+1) H(+)(in) = a plastoquinol + NADP(+) + n H(+)(out). Its function is as follows. NDH shuttles electrons from NAD(P)H:plastoquinone, via FMN and iron-sulfur (Fe-S) centers, to quinones in the photosynthetic chain and possibly in a chloroplast respiratory chain. The immediate electron acceptor for the enzyme in this species is believed to be plastoquinone. Couples the redox reaction to proton translocation, and thus conserves the redox energy in a proton gradient. In Buxus microphylla (Littleleaf boxwood), this protein is NAD(P)H-quinone oxidoreductase subunit 5, chloroplastic (ndhF).